A 582-amino-acid chain; its full sequence is 15-cis-phytoene desaturase, chloroplastic/chromoplastic (582 aa).

The N-terminal 110 residues, 1–110 (MPQIGLVSAV…FRSSPRPTKP (110 aa)), are a transit peptide targeting the chloroplast and chromoplast. FAD contacts are provided by residues 140 to 141 (EA), Lys-148, 165 to 166 (HI), and Tyr-171. Arg-306 contributes to the substrate binding site. 2 residues coordinate FAD: Ile-348 and Asp-537. Ala-545 is a binding site for substrate. Residue Met-547 coordinates FAD.

This sequence belongs to the carotenoid/retinoid oxidoreductase family. In terms of assembly, homotetramer. Requires FAD as cofactor.

The protein localises to the plastid. It localises to the chloroplast. The protein resides in the chromoplast. Its subcellular location is the membrane. The enzyme catalyses 2 a plastoquinone + 15-cis-phytoene = 9,9',15-tri-cis-zeta-carotene + 2 a plastoquinol. The protein operates within carotenoid biosynthesis; lycopene biosynthesis. Its activity is regulated as follows. Inhibited by the herbicides metflurazon, difunone, fluridone and diflufenican. In terms of biological role, converts phytoene into zeta-carotene via the intermediary of phytofluene by the symmetrical introduction of two double bonds at the C-11 and C-11' positions of phytoene with a concomitant isomerization of two neighboring double bonds at the C9 and C9' positions from trans to cis. This Capsicum annuum (Capsicum pepper) protein is 15-cis-phytoene desaturase, chloroplastic/chromoplastic (PDS).